Here is a 175-residue protein sequence, read N- to C-terminus: UPF0398 protein SSA_1858 (175 aa).

It belongs to the UPF0398 family.

The polypeptide is UPF0398 protein SSA_1858 (Streptococcus sanguinis (strain SK36)).